Here is a 237-residue protein sequence, read N- to C-terminus: DNA repair protein RecO (237 aa).

Belongs to the RecO family.

Functionally, involved in DNA repair and RecF pathway recombination. This is DNA repair protein RecO from Rickettsia africae (strain ESF-5).